Consider the following 216-residue polypeptide: CASP-like protein 2U1 (216 aa).

The segment at 1–30 is disordered; it reads MKQDTEMGEATNGYIGTPGTVPVSHAGNDS. The Cytoplasmic segment spans residues 1–37; that stretch reads MKQDTEMGEATNGYIGTPGTVPVSHAGNDSGMRRMRT. Residues 38-58 traverse the membrane as a helical segment; the sequence is ASILMRLTAMALCVTALVTMV. Residues 59-86 are Extracellular-facing; the sequence is TDKQTHYFNFASTTIVKTAEYTNVLALK. The chain crosses the membrane as a helical span at residues 87 to 107; sequence VFVYTNGVIAGYSLLQALWTI. Residues 108–128 are Cytoplasmic-facing; sequence VAKSSYSTSKARLWTTFFLDQ. Residues 129 to 148 traverse the membrane as a helical segment; sequence FIVYVLIGVTGAATEVAYIA. Residues 149 to 170 are Extracellular-facing; it reads EKGESDVAWPKQCNNFGRFCSQ. Residues 171–191 traverse the membrane as a helical segment; that stretch reads VGASVIVCFVAILTLVFLAVL. Residues 192 to 216 lie on the Cytoplasmic side of the membrane; that stretch reads SAKQLFIHERPSRTTRKDGYYTSNQ.

Belongs to the Casparian strip membrane proteins (CASP) family. Homodimer and heterodimers.

The protein resides in the cell membrane. In Marchantia polymorpha (Common liverwort), this protein is CASP-like protein 2U1.